A 566-amino-acid polypeptide reads, in one-letter code: MDEGGTPLLPDSLVYQIFLSLGPADVLAAGLVCRQWQAVSRDEFLWREQFYRYYQVARDVPRHPAAMSWYEEFQRLYDTVPCVEVQTLREHTDQVLHLSFSHSGYQFASCSKDCTVKIWSNDLTISLLHSADMRPYNWSYTQFSQFNKDDSLLLASGVFLGPHNSSSGEIAVISLDSFALLSRVRNKPYDVFGCWLTETSLISGNLHRIGDITSCSVLWLNNAFQDVESENVNVVKRLFKIQNLNASTVRTVMVADCSRFDSPDLLLEAGDPATSPCRIFDLGSDNEEVVAGPAPAHAKEGLRHFLDRVLEGRAQPQLSERMLETKVAELLAQGHTKPPERSATGAKSKYLIFTTGCLTYSPHQIGIKQILPHQMTTAGPVLGEGRGSDAFFDALDHVIDIHGHIIGMGLSPDNRYLYVNSRAWPNGAVVADPMQPPPIAEEIDLLVFDLKTMREVRRALRAHRAYTPNDECFFIFLDVSRDFVASGAEDRHGYIWDRHYNICLARLRHEDVVNSVVFSPQEQELLLTASDDATIKAWRSPRTMRVLQAPRPRPRTFFSWLASQRR.

Positions 3 to 49 (EGGTPLLPDSLVYQIFLSLGPADVLAAGLVCRQWQAVSRDEFLWREQ) constitute an F-box domain. WD repeat units follow at residues 83 to 125 (VEVQ…DLTI), 126 to 178 (SLLH…LDSF), 179 to 238 (ALLS…VKRL), and 239 to 281 (FKIQ…RIFD). A Phosphoserine; by PLK4 modification is found at Ser151. Ser284 carries the post-translational modification Phosphoserine. The short motif at 303 to 311 (RHFLDRVLE) is the D-box element. 3 WD repeats span residues 394–447 (ALDH…DLLV), 458–501 (RALR…RHYN), and 502–539 (ICLARLRHEDVVNSVVFSPQEQELLLTASDDATIKAWR).

Belongs to the FBXW5 family. As to quaternary structure, part of the SCF (SKP1-CUL1-F-box) E3 ubiquitin-protein ligase complex SCF(FBXW5) composed of CUL1, SKP1, RBX1 and FBXW5. Component of the DCX(FBXW5) E3 ubiquitin ligase complex, at least composed of (CUL4A or CUL4B), DDB1, FBXW5 and RBX1. Interacts with CDC20, EPS8, TSC1, TSC2 and SASS6. Interacts with TNFAIP8L1; TNFAIP8L1 competes with TSC2 to bind FBXW5 increasing TSC2 stability by preventing its ubiquitination. Phosphorylated at Ser-151 by PLK4 during the G1/S transition, leading to inhibit its ability to ubiquitinate SASS6. Post-translationally, ubiquitinated and degraded by the APC/C complex during mitosis and G1 phase.

The protein localises to the cytoplasm. It functions in the pathway protein modification; protein ubiquitination. Functionally, substrate recognition component of both SCF (SKP1-CUL1-F-box protein) and DCX (DDB1-CUL4-X-box) E3 ubiquitin-protein ligase complexes. Substrate recognition component of the SCF(FBXW5) E3 ubiquitin-protein ligase complex which mediates the ubiquitination and subsequent proteasomal degradation of SASS6 during S phase, leading to prevent centriole reduplication. The SCF(FBXW5) complex also mediates ubiquitination and degradation of actin-regulator EPS8 during G2 phase, leading to the transient degradation of EPS8 and subsequent cell shape changes required to allow mitotic progression. Substrate-specific adapter of the DCX(FBXW5) E3 ubiquitin-protein ligase complex which mediates the polyubiquitination and subsequent degradation of TSC2. May also act as a negative regulator of MAP3K7/TAK1 signaling in the interleukin-1B (IL1B) signaling pathway. The polypeptide is F-box/WD repeat-containing protein 5 (FBXW5) (Homo sapiens (Human)).